A 377-amino-acid polypeptide reads, in one-letter code: Succinyl-diaminopimelate desuccinylase (377 aa).

Residue histidine 67 participates in Zn(2+) binding. Residue aspartate 69 is part of the active site. Position 100 (aspartate 100) interacts with Zn(2+). Residue glutamate 134 is the Proton acceptor of the active site. Glutamate 135, glutamate 163, and histidine 349 together coordinate Zn(2+).

The protein belongs to the peptidase M20A family. DapE subfamily. As to quaternary structure, homodimer. Zn(2+) is required as a cofactor. It depends on Co(2+) as a cofactor.

The catalysed reaction is N-succinyl-(2S,6S)-2,6-diaminopimelate + H2O = (2S,6S)-2,6-diaminopimelate + succinate. Its pathway is amino-acid biosynthesis; L-lysine biosynthesis via DAP pathway; LL-2,6-diaminopimelate from (S)-tetrahydrodipicolinate (succinylase route): step 3/3. In terms of biological role, catalyzes the hydrolysis of N-succinyl-L,L-diaminopimelic acid (SDAP), forming succinate and LL-2,6-diaminopimelate (DAP), an intermediate involved in the bacterial biosynthesis of lysine and meso-diaminopimelic acid, an essential component of bacterial cell walls. This Actinobacillus pleuropneumoniae serotype 5b (strain L20) protein is Succinyl-diaminopimelate desuccinylase.